Reading from the N-terminus, the 427-residue chain is Histidine--tRNA ligase (427 aa).

Belongs to the class-II aminoacyl-tRNA synthetase family. As to quaternary structure, homodimer.

Its subcellular location is the cytoplasm. It catalyses the reaction tRNA(His) + L-histidine + ATP = L-histidyl-tRNA(His) + AMP + diphosphate + H(+). The chain is Histidine--tRNA ligase from Alteromonas mediterranea (strain DSM 17117 / CIP 110805 / LMG 28347 / Deep ecotype).